Here is a 581-residue protein sequence, read N- to C-terminus: Zinc finger protein 319 (581 aa).

The span at 1-22 (MSESWQQPPQTQPQQPQAPQPQ) shows a compositional bias: low complexity. Positions 1–39 (MSESWQQPPQTQPQQPQAPQPQHHAETPPALAEHTLPPG) are disordered. Residues 75-99 (PKCGVCGHDLAHLSSPHEHQCLAGH) form a C2H2-type 1 zinc finger. A C2H2-type 2; degenerate zinc finger spans residues 103–125 (FQCTQCLKIFHQATDLLEHQCVQ). Residue Lys129 forms a Glycyl lysine isopeptide (Lys-Gly) (interchain with G-Cter in SUMO2) linkage. 4 C2H2-type zinc fingers span residues 131–153 (FVCGVCKMGFSLLTSLAQHHSSH), 201–223 (YSCPVCQKPFKHLSELSRHERIH), 229–251 (YKCTLCDKSFSQSSHLVHHKRTH), and 257–279 (YKCAVCEKTFKHRSHLVRHMYAH). Ser280 is modified (phosphoserine). Residues 286–308 (FRCNVCELHFKESSELLQHPCTP) form a C2H2-type 7; degenerate zinc finger. 3 consecutive C2H2-type zinc fingers follow at residues 314–336 (FRCGECQKAFKRPSDLRQHERTH), 342–364 (FKCDLCPMGFKQQYALMRHRRTH), and 370–392 (FKCGLCEKGFGQPSHLLYHQHVH). Residues 398-420 (FKCPVCQKGFDQSAELLRHKCLP) form a C2H2-type 11; degenerate zinc finger. The C2H2-type 12 zinc-finger motif lies at 427-449 (FKCPVCNKAYKRASALQKHQLSH). The C2H2-type 13; degenerate zinc-finger motif lies at 457 to 479 (LRCTLCERRFFSSSEFVQHRCDP). C2H2-type zinc fingers lie at residues 485–507 (LKCPDCEKRFKYASDLQRHRRVH), 513–535 (YKCPSCDKAFKQREHLNKHQGVH), and 541–563 (FKCVWCGERFLDVALLQEHSAQH).

It belongs to the krueppel C2H2-type zinc-finger protein family.

It localises to the nucleus. May be involved in transcriptional regulation. The protein is Zinc finger protein 319 (Znf319) of Mus musculus (Mouse).